Consider the following 284-residue polypeptide: Nucleotide-binding protein VF_0384 (284 aa).

Residue 8–15 (GSSGAGKS) participates in ATP binding. GTP is bound at residue 56-59 (DIRN).

The protein belongs to the RapZ-like family.

In terms of biological role, displays ATPase and GTPase activities. This Aliivibrio fischeri (strain ATCC 700601 / ES114) (Vibrio fischeri) protein is Nucleotide-binding protein VF_0384.